We begin with the raw amino-acid sequence, 465 residues long: Branched-chain amino acid permease BcaP (465 aa).

12 helical membrane-spanning segments follow: residues 28 to 48, 56 to 76, 88 to 110, 149 to 169, 181 to 201, 219 to 239, 259 to 279, 309 to 329, 359 to 379, 380 to 400, 416 to 436, and 438 to 458; these read FLAL…PGQV, GVVF…LAYA, AYSW…ALLA, DGGI…IIVF, ILVV…ITVI, FGGF…YIGF, GIIG…LVLV, VVTA…VLAG, VWTL…AFLA, QLIS…IYSL, PFYP…FWGL, and VQAK…YFAY.

Belongs to the amino acid-polyamine-organocation (APC) superfamily.

The protein resides in the cell membrane. Its function is as follows. Branched-chain amino acid transport system that specifically transports branched-chain amino acids (BCAAs) (isoleucine, leucine and valine) and, to a lesser extent, methionine. Important for CodY-mediated regulation, and required for optimal growth in media containing free amino acids as the only amino acid source. In Lactococcus lactis subsp. cremoris (strain MG1363), this protein is Branched-chain amino acid permease BcaP.